We begin with the raw amino-acid sequence, 901 residues long: MRILKIQTLRGPNYWSIRRHKLIVMRLDLETLAETPSNEIPGFYEGLVEALPSLEGHYCSPGCHGGFLMRVREGTMMGHIVEHVALELQELAGMHVGFGRTRETATPGIYQVVIEYLNEEAGRYAGRAAVRLCQSIVDRGRYPKAELEQDIQDLKDLWRDASLGPSTEAIVKEAEKRGIPWMQLSARFLIQLGYGVNHKRMQATMTDKTGILGVELACDKEATKRILAASGVPVPRGTVINFLDDLEEAIEYVGGYPIVIKPLDGNHGRGITIDIRSWEEAEAAYEAARQVSRSIIVERYYVGRDHRVLVVDGKVVAVAERVPAHVIGNGRSTIAELIEEINQDPNRGDGHDKVLTKIELDRTSYQLLERAGYTLNSVPPKGTICYLRATANLSTGGTAVDRTDEIHPENIWLAQRVVKIIGLDIAGLDIVTTDISRPLRELDGVIVEVNAAPGFRMHVAPSQGIPRNVAGAVMDMLFPNEQSGRIPILSVTGTNGKTTTTRLLAHIYKQTGKVVGYTTTDGTYIGDYLVESGDNTGPQSAHVILQDPTVEVAVLETARGGILRSGLGFESANVGVVLNVAADHLGIGDIDTIDQLANLKSVVAESVYPDGYAVLNADDRRVAAMAEKTKANIAYFTMNPDSELVRKHIQKGGVAAVYENGYLSIVKGDWTHRIERAEQIPLTMGGRAPFMIANALAASLAAFVQNVSIEQIRAGLRTFRASVSQTPGRMNLFNLGNYHALVDYAHNPASYEAVGAFVRNWTSGQRIGVVGGPGDRRDEDFVTLGKLAAEIFDYIIVKEDDDTRGRPRGSASALITKGITQVKPDARYESILDETQAINKGLDMAPANGLVVILPESVSRAIKLIKLRGLVKEEIQQQNPSTTVIDNQNGVASSSVINTLL.

The region spanning 224–478 (KRILAASGVP…VAGAVMDMLF (255 aa)) is the ATP-grasp domain. 493–499 (GTNGKTT) serves as a coordination point for ATP.

This sequence in the C-terminal section; belongs to the MurCDEF family. As to quaternary structure, homodimer.

The catalysed reaction is [L-4-(L-arginin-2-N-yl)aspartate](n) + L-aspartate + ATP = [L-4-(L-arginin-2-N-yl)aspartate](n)-L-aspartate + ADP + phosphate + H(+). It carries out the reaction [L-4-(L-arginin-2-N-yl)aspartate](n)-L-aspartate + L-arginine + ATP = [L-4-(L-arginin-2-N-yl)aspartate](n+1) + ADP + phosphate + H(+). Its function is as follows. Catalyzes the ATP-dependent polymerization of arginine and aspartate to multi-L-arginyl-poly-L-aspartic acid (cyanophycin; a water-insoluble reserve polymer). The chain is Cyanophycin synthetase (cphA) from Trichormus variabilis (strain ATCC 29413 / PCC 7937) (Anabaena variabilis).